An 829-amino-acid chain; its full sequence is MPAQTSRARPVEEMTAAQAREAHESLSAEIAEHDRRYHGEDAPIISDAEYDALRRRLEAIEERFPELAGTGAASVSVGAKASDKFAKVRHAVPMLSLGNAFAEEEITEFVERVRRFLGLPASEPLAFTAEPKIDGLSLSLRYEGGRLVTAATRGDGEVGEDVTANVRTIREIPHELAGDDVPEICEVRGEVYLSHADFAAINARQEEAGRPLFANPRNAAAGSLRQLDPGITASRPLRFFAYAAGEMSSWPAETQSGLIGAFRRFGLPVNPRTKRCTSVAEMLAHYRAIETERAELGYDIDGVVYKVDEFALQRRLGFVARAPRWALAHKFPAQRAVTVIEAIEINVGRTGSLNPLARLKPVTVGGVVVSNATLHNEDYIRGIDADGNTIRSGINIWDGFRLREDVDLRQGSDVRVGDTVVVLRAGDVIPKVADVVLERRPADAVPYAFPETCPACGSHAVRAYNPRTGKLDSVRRCTGGLICPAQGQERLRHFVSRNAFDIEGFGETYIATLFEAGLVRQPADLFRLDFEPLKAAIVARRQALSAERALAAGKTPEAKKAKPKANEEDKAIHNLLAAVEARRTIPLNRFIFALGIEQVGEATAKALAKHFPDMPALMEGVRAAAACRPGPDWIELASLPRVGPTTRERLLAAAEAGETDLLADGAVTRLTSAQKEALLAAYGDRDGLRNAVERALRQKPGDAYRHLADDSEIGAVTTASLIEFFSEAHNVEAVEALLREVRTERAGTPAAAAVFSGQTVVFTGSLERMTRSEAKATAERLGAKVSGSVSAKTDLVVAGPGAGSKLKDAEKHGVRVISEAEWLAMVEAA.

The tract at residues 1–23 (MPAQTSRARPVEEMTAAQAREAH) is disordered. NAD(+) is bound by residues 47 to 51 (DAEYD), 96 to 97 (SL), and Glu-130. Residue Lys-132 is the N6-AMP-lysine intermediate of the active site. Arg-153, Glu-190, Lys-306, and Lys-330 together coordinate NAD(+). Zn(2+)-binding residues include Cys-453, Cys-456, Cys-477, and Cys-483. The BRCT domain maps to 750-829 (AAAAVFSGQT…AEWLAMVEAA (80 aa)).

The protein belongs to the NAD-dependent DNA ligase family. LigA subfamily. It depends on Mg(2+) as a cofactor. Mn(2+) serves as cofactor.

It carries out the reaction NAD(+) + (deoxyribonucleotide)n-3'-hydroxyl + 5'-phospho-(deoxyribonucleotide)m = (deoxyribonucleotide)n+m + AMP + beta-nicotinamide D-nucleotide.. Its function is as follows. DNA ligase that catalyzes the formation of phosphodiester linkages between 5'-phosphoryl and 3'-hydroxyl groups in double-stranded DNA using NAD as a coenzyme and as the energy source for the reaction. It is essential for DNA replication and repair of damaged DNA. The chain is DNA ligase from Methylobacterium nodulans (strain LMG 21967 / CNCM I-2342 / ORS 2060).